The chain runs to 335 residues: Probable cytosolic iron-sulfur protein assembly protein Ciao1 (335 aa).

7 WD repeats span residues 12 to 51 (GHKGRIWGVAWHPKGNTFASCGEDKAIRIWSLSGNSWSTK), 57 to 96 (GHKRTIREIRWSPCGQYLASASFDATTAIWSKSSGEFECN), 101 to 140 (GHENEVKSVSWSKSGGLLATCSRDKSVWIWEVAGDDEFEC), 146 to 185 (PHTQDVKRVVWHPTKEILASASYDNTIKMFAESALDSDWD), 192 to 231 (SHTSTVWSIDFDADGERLVSCSDDTTLKIWRAYHPGNDAG), 250 to 289 (QHSRAIYDVSWCKLTGLIATACGDDGIRIFKESSDSKRDE), and 301 to 335 (AHEQDVNSVEWNPVMAGQLISCSDDGTIKIWKMLD).

Belongs to the WD repeat CIA1 family.

Essential component of the cytosolic iron-sulfur (Fe/S) protein assembly machinery. Required for the maturation of extramitochondrial Fe/S proteins. The sequence is that of Probable cytosolic iron-sulfur protein assembly protein Ciao1 from Drosophila willistoni (Fruit fly).